The chain runs to 415 residues: Serine hydroxymethyltransferase 1 (415 aa).

(6S)-5,6,7,8-tetrahydrofolate-binding positions include Leu122 and 126 to 128 (GHL). Residue Lys230 is modified to N6-(pyridoxal phosphate)lysine.

It belongs to the SHMT family. In terms of assembly, homodimer. Pyridoxal 5'-phosphate is required as a cofactor.

Its subcellular location is the cytoplasm. It catalyses the reaction (6R)-5,10-methylene-5,6,7,8-tetrahydrofolate + glycine + H2O = (6S)-5,6,7,8-tetrahydrofolate + L-serine. It participates in one-carbon metabolism; tetrahydrofolate interconversion. Its pathway is amino-acid biosynthesis; glycine biosynthesis; glycine from L-serine: step 1/1. Its function is as follows. Catalyzes the reversible interconversion of serine and glycine with tetrahydrofolate (THF) serving as the one-carbon carrier. This reaction serves as the major source of one-carbon groups required for the biosynthesis of purines, thymidylate, methionine, and other important biomolecules. Also exhibits THF-independent aldolase activity toward beta-hydroxyamino acids, producing glycine and aldehydes, via a retro-aldol mechanism. The protein is Serine hydroxymethyltransferase 1 of Cupriavidus pinatubonensis (strain JMP 134 / LMG 1197) (Cupriavidus necator (strain JMP 134)).